The chain runs to 77 residues: Large ribosomal subunit protein bL28 (77 aa).

Belongs to the bacterial ribosomal protein bL28 family.

This chain is Large ribosomal subunit protein bL28, found in Leptothrix cholodnii (strain ATCC 51168 / LMG 8142 / SP-6) (Leptothrix discophora (strain SP-6)).